Consider the following 713-residue polypeptide: Polyribonucleotide nucleotidyltransferase (713 aa).

Positions 485 and 491 each coordinate Mg(2+). The 60-residue stretch at 552–611 (PRIYTMKIDPKKIKDVIGKGGATVRSLTEETGTSIDIDDDGTVKIAAVDKNAVQEVMSRI) folds into the KH domain. One can recognise an S1 motif domain in the interval 621 to 689 (GVVYKGKVTR…RQGRIRLTMK (69 aa)). Positions 694-713 (DQTKNEENLLQSEEGSPVQE) are disordered. Over residues 701–713 (NLLQSEEGSPVQE) the composition is skewed to polar residues.

The protein belongs to the polyribonucleotide nucleotidyltransferase family. Component of the RNA degradosome, which is a multiprotein complex involved in RNA processing and mRNA degradation. Requires Mg(2+) as cofactor.

It localises to the cytoplasm. It carries out the reaction RNA(n+1) + phosphate = RNA(n) + a ribonucleoside 5'-diphosphate. Its function is as follows. Involved in mRNA degradation. Catalyzes the phosphorolysis of single-stranded polyribonucleotides processively in the 3'- to 5'-direction. The polypeptide is Polyribonucleotide nucleotidyltransferase (Histophilus somni (strain 2336) (Haemophilus somnus)).